Reading from the N-terminus, the 189-residue chain is Histidinol-phosphate aminotransferase (189 aa).

Belongs to the class-II pyridoxal-phosphate-dependent aminotransferase family. Histidinol-phosphate aminotransferase subfamily. As to quaternary structure, homodimer. Requires pyridoxal 5'-phosphate as cofactor.

The catalysed reaction is L-histidinol phosphate + 2-oxoglutarate = 3-(imidazol-4-yl)-2-oxopropyl phosphate + L-glutamate. The protein operates within amino-acid biosynthesis; L-histidine biosynthesis; L-histidine from 5-phospho-alpha-D-ribose 1-diphosphate: step 7/9. The polypeptide is Histidinol-phosphate aminotransferase (hisC) (Thiocapsa roseopersicina).